The sequence spans 153 residues: Cytochrome c-type biogenesis protein CcmE (153 aa).

Residues 1–8 are Cytoplasmic-facing; that stretch reads MTPVQRRR. Residues 9–29 form a helical; Signal-anchor for type II membrane protein membrane-spanning segment; the sequence is LAWVLLALLASGLATALVAMA. Residues 30–153 lie on the Extracellular side of the membrane; the sequence is LERNIAYLYT…DVPVTAPEVR (124 aa). Heme-binding residues include H123 and Y127.

The protein belongs to the CcmE/CycJ family.

Its subcellular location is the cell membrane. Functionally, heme chaperone required for the biogenesis of c-type cytochromes. Transiently binds heme delivered by CcmC and transfers the heme to apo-cytochromes in a process facilitated by CcmF and CcmH. The chain is Cytochrome c-type biogenesis protein CcmE from Stenotrophomonas maltophilia (strain K279a).